The sequence spans 1300 residues: CRISPR-associated endonuclease Cas12a (1300 aa).

Residues Met-1 to Gln-24 form a wedge region 1 region. 2 recognition domain regions span residues Gly-25–Ile-339 and Asp-340–Tyr-591. Binds crRNA alone and in crRNA-target DNA heteroduplex stretches follow at residues Tyr-47–Lys-51 and Phe-182–Arg-186. Residues Asn-301–Asn-305 are binds DNA in crRNA-target DNA heteroduplex. Binds crRNA in crRNA-target DNA heteroduplex regions lie at residues Lys-326–Leu-329 and His-538–Lys-541. Positions Tyr-591–Lys-595 are binds crRNA. The interval Ser-592 to Leu-662 is wedge region 2. Residues Leu-662–Ile-679 are LKL, important for PAM recognition and DNA unwinding. Residues Pro-663–Tyr-762 are PAM-interacting domain (PI). Residues Lys-671–Lys-677 are binds DNA protospacer adjacent motif (PAM) on target DNA. The tract at residues Arg-692 to Gln-704 is binds single-strand non-target DNA. Positions Lys-763–Gly-892 are wedge region 3. Binds crRNA stretches follow at residues Lys-791–Ser-794 and Leu-803–His-804. Active-site for pre-crRNA processing residues include His-843, Lys-852, and Lys-869. 2 binds crRNA regions span residues Asn-851–Asn-853 and Tyr-865–Phe-873. The ruvC-I stretch occupies residues Ala-893–Tyr-953. Residue Asp-917 is the For DNase activity of RuvC domain of the active site. The bridge helix stretch occupies residues His-954–Trp-971. Residues Lys-972–Pro-1078 are ruvC-II. The For DNase activity of RuvC domain role is filled by Glu-1006. Residues Ala-1079–Ala-1254 form a nuclease domain region. Residue Asp-1255 is the For DNase activity of RuvC domain of the active site. Positions Asp-1255–Asn-1300 are ruvC-III.

The protein belongs to the CRISPR-associated endonuclease Cas12a family. In terms of assembly, might be a homodimer. Might be a monomer. The cofactor is Ca(2+). Mg(2+) is required as a cofactor.

It carries out the reaction Endonucleolytic cleavage to 5'-phosphodinucleotide and 5'-phosphooligonucleotide end-products.. It catalyses the reaction RNA = a 5'-hydroxy-ribonucleotide + n nucleoside-2',3'-cyclophosphates.. Its function is as follows. CRISPR (clustered regularly interspaced short palindromic repeat), is an adaptive immune system that provides protection against mobile genetic elements (viruses, transposable elements and conjugative plasmids). CRISPR clusters contain sequences complementary to antecedent mobile elements and target invading nucleic acids. CRISPR clusters are transcribed and processed into CRISPR RNA (crRNA). Has endonuclease activity on pre-crRNA and dsDNA, using different active sites. A single-RNA guided endonuclease that is also capable of guiding crRNA processing; correct processing of pre-crRNA requires only this protein and the CRISPR locus. pre-crRNA processing proceeds by an intramolecular nucleophilic attack on the scissile phosphate by the 2'-OH of the upstream ribonucleotide, the divalent cation (which is bound by the crRNA) is probably required for ordering the crRNA pseudoknot and/or increasing RNA binding. RNA mutagenesis studies show pre-crRNA cleavage is highly sequence- and structure-specific. Forms a complex with crRNA and complementary dsDNA, where the crRNA displaces the non-target DNA strand and directs endonucleolytic cleavage of both strands of the DNA. Cleavage results in staggered 5-base 5' overhangs 14-18 and 21-23 bases downstream of the PAM (protospacer adjacent motif) on the non-target and target strands respectively. Both target and non-target strand DNA are probably independently cleaved in the same active site. When this protein is expressed in E.coli it prevents plasmids homologous to the first CRISPR spacer from transforming, formally showing it is responsible for plasmid immunity. This is CRISPR-associated endonuclease Cas12a from Francisella tularensis subsp. novicida (strain U112).